Consider the following 100-residue polypeptide: NADH-quinone oxidoreductase subunit K (100 aa).

Transmembrane regions (helical) follow at residues 3–23 (PTAYYVALSGLLFAIGMIGVL), 29–49 (IMIFLSVELMLNAANLALVAF), and 63–83 (FIVMTLAAAEVAIGLAIIVAI).

This sequence belongs to the complex I subunit 4L family. As to quaternary structure, NDH-1 is composed of 15 different subunits. Subunits NuoA, H, J, K, L, M, N constitute the membrane sector of the complex.

It is found in the cell membrane. It carries out the reaction a quinone + NADH + 5 H(+)(in) = a quinol + NAD(+) + 4 H(+)(out). In terms of biological role, NDH-1 shuttles electrons from NADH, via FMN and iron-sulfur (Fe-S) centers, to quinones in the respiratory chain. The immediate electron acceptor for the enzyme in this species is believed to be a menaquinone. Couples the redox reaction to proton translocation (for every two electrons transferred, four hydrogen ions are translocated across the cytoplasmic membrane), and thus conserves the redox energy in a proton gradient. This Deinococcus geothermalis (strain DSM 11300 / CIP 105573 / AG-3a) protein is NADH-quinone oxidoreductase subunit K.